The chain runs to 156 residues: MNINATLIGQAIWFALFVFFCMKFVWPPISRALDERKQKIAEGLSAADRAERDLELAQEKATANLKESKEKAAEIIDQANRRANQIVEEAKDAARAEGERLIAKAHSEIDQEVNQAREQLRKDVAVLALSGAEKVLGGEVNQDKHTQLLEQLAAEL.

Residues 7–27 form a helical membrane-spanning segment; sequence LIGQAIWFALFVFFCMKFVWP.

It belongs to the ATPase B chain family. In terms of assembly, F-type ATPases have 2 components, F(1) - the catalytic core - and F(0) - the membrane proton channel. F(1) has five subunits: alpha(3), beta(3), gamma(1), delta(1), epsilon(1). F(0) has three main subunits: a(1), b(2) and c(10-14). The alpha and beta chains form an alternating ring which encloses part of the gamma chain. F(1) is attached to F(0) by a central stalk formed by the gamma and epsilon chains, while a peripheral stalk is formed by the delta and b chains.

It is found in the cell inner membrane. In terms of biological role, f(1)F(0) ATP synthase produces ATP from ADP in the presence of a proton or sodium gradient. F-type ATPases consist of two structural domains, F(1) containing the extramembraneous catalytic core and F(0) containing the membrane proton channel, linked together by a central stalk and a peripheral stalk. During catalysis, ATP synthesis in the catalytic domain of F(1) is coupled via a rotary mechanism of the central stalk subunits to proton translocation. Component of the F(0) channel, it forms part of the peripheral stalk, linking F(1) to F(0). The polypeptide is ATP synthase subunit b (Alcanivorax borkumensis (strain ATCC 700651 / DSM 11573 / NCIMB 13689 / SK2)).